The sequence spans 548 residues: Chaperonin GroEL (548 aa).

Residues 29 to 32, lysine 50, 86 to 90, glycine 414, 478 to 480, and aspartate 494 each bind ATP; these read TMGP, DGTTT, and NAA.

The protein belongs to the chaperonin (HSP60) family. In terms of assembly, forms a cylinder of 14 subunits composed of two heptameric rings stacked back-to-back. Interacts with the co-chaperonin GroES.

The protein localises to the cytoplasm. The catalysed reaction is ATP + H2O + a folded polypeptide = ADP + phosphate + an unfolded polypeptide.. In terms of biological role, together with its co-chaperonin GroES, plays an essential role in assisting protein folding. The GroEL-GroES system forms a nano-cage that allows encapsulation of the non-native substrate proteins and provides a physical environment optimized to promote and accelerate protein folding. This Legionella pneumophila (strain Paris) protein is Chaperonin GroEL.